We begin with the raw amino-acid sequence, 498 residues long: Putative antiporter subunit mnhD2 (498 aa).

14 consecutive transmembrane segments (helical) span residues 2-22 (LSNL…ILVF), 32-52 (YLYL…LIYV), 78-98 (LSLI…AYGF), 108-128 (YHLP…FLTS), 130-150 (LFNL…LITL), 161-181 (IIYV…IGLL), 209-229 (ISLI…FMWL), 240-260 (LAAL…IRFF), 271-291 (IHPL…IGVI), 308-328 (IGFI…GAIF), 330-350 (LVND…LVYI), 368-388 (FFGV…PFSG), 403-423 (GNYI…YSLF), and 450-470 (GILS…PVLL).

This sequence belongs to the CPA3 antiporters (TC 2.A.63) subunit D family. May form a heterooligomeric complex that consists of seven subunits: mnhA2, mnhB2, mnhC2, mnhD2, mnhE2, mnhF2 and mnhG2.

Its subcellular location is the cell membrane. In Staphylococcus aureus (strain MRSA252), this protein is Putative antiporter subunit mnhD2 (mnhD2).